Here is a 223-residue protein sequence, read N- to C-terminus: Ion-translocating oxidoreductase complex subunit E (223 aa).

7 helical membrane-spanning segments follow: residues 17-37 (SLVQ…TINA), 38-58 (IGLG…ISIL), 68-88 (IPIY…LLHA), 91-111 (FNLY…CIVV), 124-144 (VISF…MFVI), 156-176 (FLFG…FTFI), and 181-201 (TIIL…VIAF).

This sequence belongs to the NqrDE/RnfAE family. As to quaternary structure, the complex is composed of six subunits: RnfA, RnfB, RnfC, RnfD, RnfE and RnfG.

The protein resides in the cell inner membrane. Its function is as follows. Part of a membrane-bound complex that couples electron transfer with translocation of ions across the membrane. The chain is Ion-translocating oxidoreductase complex subunit E from Buchnera aphidicola subsp. Schizaphis graminum (strain Sg).